The chain runs to 521 residues: Cholesterol side-chain cleavage enzyme, mitochondrial (521 aa).

Residues 1 to 39 (MLAKGLPPRSVLVKGCQTFLSAPREGLGRLRVPTGEGAG) constitute a mitochondrion transit peptide. A heme-binding site is contributed by Cys462.

This sequence belongs to the cytochrome P450 family. Interacts with FDX1/adrenodoxin. The cofactor is heme.

The protein resides in the mitochondrion inner membrane. The catalysed reaction is 6 reduced [adrenodoxin] + cholesterol + 3 O2 + 6 H(+) = 4-methylpentanal + pregnenolone + 6 oxidized [adrenodoxin] + 4 H2O. It carries out the reaction 2 reduced [adrenodoxin] + cholesterol + O2 + 2 H(+) = (22R)-hydroxycholesterol + 2 oxidized [adrenodoxin] + H2O. The enzyme catalyses (22R)-hydroxycholesterol + 2 reduced [adrenodoxin] + O2 + 2 H(+) = (20R,22R)-20,22-dihydroxycholesterol + 2 oxidized [adrenodoxin] + H2O. It catalyses the reaction (20R,22R)-20,22-dihydroxycholesterol + 2 reduced [adrenodoxin] + O2 + 2 H(+) = 4-methylpentanal + pregnenolone + 2 oxidized [adrenodoxin] + 2 H2O. Its pathway is lipid metabolism; C21-steroid hormone metabolism. The protein operates within steroid metabolism; cholesterol metabolism. In terms of biological role, a cytochrome P450 monooxygenase that catalyzes the side-chain hydroxylation and cleavage of cholesterol to pregnenolone, the precursor of most steroid hormones. Catalyzes three sequential oxidation reactions of cholesterol, namely the hydroxylation at C22 followed with the hydroxylation at C20 to yield 20R,22R-hydroxycholesterol that is further cleaved between C20 and C22 to yield the C21-steroid pregnenolone and 4-methylpentanal. Mechanistically, uses molecular oxygen inserting one oxygen atom into a substrate and reducing the second into a water molecule. Two electrons are provided by NADPH via a two-protein mitochondrial transfer system comprising flavoprotein FDXR (adrenodoxin/ferredoxin reductase) and nonheme iron-sulfur protein FDX1 or FDX2 (adrenodoxin/ferredoxin). This chain is Cholesterol side-chain cleavage enzyme, mitochondrial, found in Homo sapiens (Human).